A 517-amino-acid polypeptide reads, in one-letter code: Maturase K (517 aa).

It belongs to the intron maturase 2 family. MatK subfamily.

Its subcellular location is the plastid. It is found in the chloroplast. Usually encoded in the trnK tRNA gene intron. Probably assists in splicing its own and other chloroplast group II introns. This Trillium grandiflorum (Large-flowered trillium) protein is Maturase K.